We begin with the raw amino-acid sequence, 167 residues long: Translationally-controlled tumor protein homolog (167 aa).

In terms of domain architecture, TCTP spans 1–167 (MIIFKDVISN…WKHGIKEEKI (167 aa)).

Belongs to the TCTP family.

The protein resides in the cytoplasm. The protein localises to the cytoskeleton. Its function is as follows. Involved in protein synthesis. Involved in microtubule stabilization. The sequence is that of Translationally-controlled tumor protein homolog from Yarrowia lipolytica (strain CLIB 122 / E 150) (Yeast).